The following is a 318-amino-acid chain: tRNA U34 carboxymethyltransferase (318 aa).

Residues lysine 88, tryptophan 102, lysine 107, glycine 126, 176–177 (LE), methionine 192, tyrosine 196, and arginine 311 contribute to the carboxy-S-adenosyl-L-methionine site.

The protein belongs to the class I-like SAM-binding methyltransferase superfamily. CmoB family. In terms of assembly, homotetramer.

The enzyme catalyses carboxy-S-adenosyl-L-methionine + 5-hydroxyuridine(34) in tRNA = 5-carboxymethoxyuridine(34) in tRNA + S-adenosyl-L-homocysteine + H(+). Its function is as follows. Catalyzes carboxymethyl transfer from carboxy-S-adenosyl-L-methionine (Cx-SAM) to 5-hydroxyuridine (ho5U) to form 5-carboxymethoxyuridine (cmo5U) at position 34 in tRNAs. In Pseudomonas putida (strain W619), this protein is tRNA U34 carboxymethyltransferase.